The chain runs to 1435 residues: Gag-Pol polyprotein (1435 aa).

Gly2 is lipidated: N-myristoyl glycine; by host. Positions 7-31 (VLSGGELDRWEKIRLRPGGKKKYKL) are interaction with Gp41. The interval 8 to 43 (LSGGELDRWEKIRLRPGGKKKYKLKHIVWASRELER) is interaction with host CALM1. The interval 12–19 (ELDRWEKI) is interaction with host AP3D1. Residues 14 to 33 (DRWEKIRLRPGGKKKYKLKH) are interaction with membrane phosphatidylinositol 4,5-bisphosphate and RNA. The Nuclear export signal motif lies at 16-22 (WEKIRLR). Residues 26–32 (KKKYKLK) carry the Nuclear localization signal motif. The segment at 73-77 (EELRS) is interaction with membrane phosphatidylinositol 4,5-bisphosphate. The tract at residues 106 to 128 (EEQNKSKKKAQQAAADTGHSNQV) is disordered. At Tyr132 the chain carries Phosphotyrosine; by host. An interaction with host PPIA/CYPA and NUP153 region spans residues 189–227 (NTVGGHQAAMQMLKETINEEAAEWDRVHPVHAGPIAPGQ). The PPIA/CYPA-binding loop stretch occupies residues 217 to 225 (PVHAGPIAP). Residues 277–363 (YSPTSILDIR…GGPGHKARVL (87 aa)) form a dimerization/Multimerization of capsid protein p24 region. 2 CCHC-type zinc fingers span residues 390-407 (VKCFNCGKEGHTARNCRA) and 411-428 (KGCWKCGKEGHQMKDCTE). The tract at residues 448–481 (FSSEQTRANSPTRRELQVWGRDNNSPSEAGADRQ) is disordered. Residues 489–493 (PQVTL) form a dimerization of protease region. A Peptidase A2 domain is found at 508–577 (KEALLDTGAD…TPVNIIGRNL (70 aa)). Asp513 (for protease activity; shared with dimeric partner) is an active-site residue. Dimerization of protease regions lie at residues 537–543 (GIGGFIK) and 576–588 (NLLTQIGCTLNFP). The Reverse transcriptase domain occupies 631–821 (EGKISKIGPE…PPFLWMGYEL (191 aa)). Mg(2+) contacts are provided by Asp697, Asp772, and Asp773. Positions 814-822 (FLWMGYELH) are RT 'primer grip'. The Tryptophan repeat motif motif lies at 985–1001 (WETWWTEYWQATWIPEW). An RNase H type-1 domain is found at 1021-1144 (IVGAETFYVD…VDKLVSAGIR (124 aa)). Positions 1030, 1065, 1085, and 1136 each coordinate Mg(2+). The segment at 1150–1191 (DGIDKAQDEHEKYHSNWRAMASDFNLPPVVAKEIVASCDKCQ) adopts an Integrase-type zinc-finger fold. His1159, His1163, Cys1187, and Cys1190 together coordinate Zn(2+). An Integrase catalytic domain is found at 1201–1351 (VDCSPGIWQL…SAGERIVDII (151 aa)). Residues Asp1211, Asp1263, and Glu1299 each coordinate Mg(2+). Positions 1370–1417 (FRVYYRDSRNPLWKGPAKLLWKGEGAVVIQDNSDIKVVPRRKAKIIRD) form a DNA-binding region, integrase-type.

In terms of assembly, homotrimer; further assembles as hexamers of trimers. Interacts with gp41 (via C-terminus). Interacts with host CALM1; this interaction induces a conformational change in the Matrix protein, triggering exposure of the myristate group. Interacts with host AP3D1; this interaction allows the polyprotein trafficking to multivesicular bodies during virus assembly. Part of the pre-integration complex (PIC) which is composed of viral genome, matrix protein, Vpr and integrase. Homodimer; the homodimer further multimerizes as homohexamers or homopentamers. Interacts with human PPIA/CYPA; this interaction stabilizes the capsid. Interacts with human NUP153. Interacts with host PDZD8; this interaction stabilizes the capsid. Interacts with monkey TRIM5; this interaction destabilizes the capsid. As to quaternary structure, homodimer, whose active site consists of two apposed aspartic acid residues. In terms of assembly, heterodimer of p66 RT and p51 RT (RT p66/p51). Heterodimerization of RT is essential for DNA polymerase activity. The overall folding of the subdomains is similar in p66 RT and p51 RT but the spatial arrangements of the subdomains are dramatically different. Homotetramer; may further associate as a homohexadecamer. Part of the pre-integration complex (PIC) which is composed of viral genome, matrix protein, Vpr and integrase. Interacts with human SMARCB1/INI1 and human PSIP1/LEDGF isoform 1. Interacts with human KPNA3; this interaction might play a role in nuclear import of the pre-. integration complex. Interacts with human NUP153; this interaction might play a role in nuclear import of the pre-integration complex. The cofactor is Mg(2+). Post-translationally, specific enzymatic cleavages by the viral protease yield mature proteins. The protease is released by autocatalytic cleavage. The polyprotein is cleaved during and after budding, this process is termed maturation. Proteolytic cleavage of p66 RT removes the RNase H domain to yield the p51 RT subunit. Nucleocapsid protein p7 might be further cleaved after virus entry. In terms of processing, tyrosine phosphorylated presumably in the virion by a host kinase. Phosphorylation is apparently not a major regulator of membrane association. Phosphorylated possibly by host MAPK1; this phosphorylation is necessary for Pin1-mediated virion uncoating. Post-translationally, methylated by host PRMT6, impairing its function by reducing RNA annealing and the initiation of reverse transcription.

The protein resides in the host cell membrane. It is found in the host endosome. The protein localises to the host multivesicular body. It localises to the virion membrane. Its subcellular location is the host nucleus. The protein resides in the host cytoplasm. It is found in the virion. It catalyses the reaction Specific for a P1 residue that is hydrophobic, and P1' variable, but often Pro.. The enzyme catalyses Endohydrolysis of RNA in RNA/DNA hybrids. Three different cleavage modes: 1. sequence-specific internal cleavage of RNA. Human immunodeficiency virus type 1 and Moloney murine leukemia virus enzymes prefer to cleave the RNA strand one nucleotide away from the RNA-DNA junction. 2. RNA 5'-end directed cleavage 13-19 nucleotides from the RNA end. 3. DNA 3'-end directed cleavage 15-20 nucleotides away from the primer terminus.. It carries out the reaction 3'-end directed exonucleolytic cleavage of viral RNA-DNA hybrid.. The catalysed reaction is DNA(n) + a 2'-deoxyribonucleoside 5'-triphosphate = DNA(n+1) + diphosphate. Protease: The viral protease is inhibited by many synthetic protease inhibitors (PIs), such as amprenavir, atazanavir, indinavir, loprinavir, nelfinavir, ritonavir and saquinavir. Use of protease inhibitors in tritherapy regimens permit more ambitious therapeutic strategies. Reverse transcriptase/ribonuclease H: RT can be inhibited either by nucleoside RT inhibitors (NRTIs) or by non nucleoside RT inhibitors (NNRTIs). NRTIs act as chain terminators, whereas NNRTIs inhibit DNA polymerization by binding a small hydrophobic pocket near the RT active site and inducing an allosteric change in this region. Classical NRTIs are abacavir, adefovir (PMEA), didanosine (ddI), lamivudine (3TC), stavudine (d4T), tenofovir (PMPA), zalcitabine (ddC), and zidovudine (AZT). Classical NNRTIs are atevirdine (BHAP U-87201E), delavirdine, efavirenz (DMP-266), emivirine (I-EBU), and nevirapine (BI-RG-587). The tritherapies used as a basic effective treatment of AIDS associate two NRTIs and one NNRTI. In terms of biological role, mediates, with Gag polyprotein, the essential events in virion assembly, including binding the plasma membrane, making the protein-protein interactions necessary to create spherical particles, recruiting the viral Env proteins, and packaging the genomic RNA via direct interactions with the RNA packaging sequence (Psi). Gag-Pol polyprotein may regulate its own translation, by the binding genomic RNA in the 5'-UTR. At low concentration, the polyprotein would promote translation, whereas at high concentration, the polyprotein would encapsidate genomic RNA and then shut off translation. Targets the polyprotein to the plasma membrane via a multipartite membrane-binding signal, that includes its myristoylated N-terminus. Matrix protein is part of the pre-integration complex. Implicated in the release from host cell mediated by Vpu. Binds to RNA. Its function is as follows. Forms the conical core that encapsulates the genomic RNA-nucleocapsid complex in the virion. Most core are conical, with only 7% tubular. The core is constituted by capsid protein hexamer subunits. The core is disassembled soon after virion entry. Host restriction factors such as monkey TRIM5-alpha or TRIMCyp bind retroviral capsids and cause premature capsid disassembly, leading to blocks in reverse transcription. Capsid restriction by TRIM5 is one of the factors which restricts HIV-1 to the human species. Host PIN1 apparently facilitates the virion uncoating. On the other hand, interactions with PDZD8 or CYPA stabilize the capsid. Functionally, encapsulates and protects viral dimeric unspliced genomic RNA (gRNA). Binds these RNAs through its zinc fingers. Acts as a nucleic acid chaperone which is involved in rearangement of nucleic acid secondary structure during gRNA retrotranscription. Also facilitates template switch leading to recombination. As part of the polyprotein, participates in gRNA dimerization, packaging, tRNA incorporation and virion assembly. In terms of biological role, aspartyl protease that mediates proteolytic cleavages of Gag and Gag-Pol polyproteins during or shortly after the release of the virion from the plasma membrane. Cleavages take place as an ordered, step-wise cascade to yield mature proteins. This process is called maturation. Displays maximal activity during the budding process just prior to particle release from the cell. Also cleaves Nef and Vif, probably concomitantly with viral structural proteins on maturation of virus particles. Hydrolyzes host EIF4GI and PABP1 in order to shut off the capped cellular mRNA translation. The resulting inhibition of cellular protein synthesis serves to ensure maximal viral gene expression and to evade host immune response. Also mediates cleavage of host YTHDF3. Mediates cleavage of host CARD8, thereby activating the CARD8 inflammasome, leading to the clearance of latent HIV-1 in patient CD4(+) T-cells after viral reactivation; in contrast, HIV-1 can evade CARD8-sensing when its protease remains inactive in infected cells prior to viral budding. Multifunctional enzyme that converts the viral RNA genome into dsDNA in the cytoplasm, shortly after virus entry into the cell. This enzyme displays a DNA polymerase activity that can copy either DNA or RNA templates, and a ribonuclease H (RNase H) activity that cleaves the RNA strand of RNA-DNA heteroduplexes in a partially processive 3' to 5' endonucleasic mode. Conversion of viral genomic RNA into dsDNA requires many steps. A tRNA(3)-Lys binds to the primer-binding site (PBS) situated at the 5'-end of the viral RNA. RT uses the 3' end of the tRNA primer to perform a short round of RNA-dependent minus-strand DNA synthesis. The reading proceeds through the U5 region and ends after the repeated (R) region which is present at both ends of viral RNA. The portion of the RNA-DNA heteroduplex is digested by the RNase H, resulting in a ssDNA product attached to the tRNA primer. This ssDNA/tRNA hybridizes with the identical R region situated at the 3' end of viral RNA. This template exchange, known as minus-strand DNA strong stop transfer, can be either intra- or intermolecular. RT uses the 3' end of this newly synthesized short ssDNA to perform the RNA-dependent minus-strand DNA synthesis of the whole template. RNase H digests the RNA template except for two polypurine tracts (PPTs) situated at the 5'-end and near the center of the genome. It is not clear if both polymerase and RNase H activities are simultaneous. RNase H probably can proceed both in a polymerase-dependent (RNA cut into small fragments by the same RT performing DNA synthesis) and a polymerase-independent mode (cleavage of remaining RNA fragments by free RTs). Secondly, RT performs DNA-directed plus-strand DNA synthesis using the PPTs that have not been removed by RNase H as primers. PPTs and tRNA primers are then removed by RNase H. The 3' and 5' ssDNA PBS regions hybridize to form a circular dsDNA intermediate. Strand displacement synthesis by RT to the PBS and PPT ends produces a blunt ended, linear dsDNA copy of the viral genome that includes long terminal repeats (LTRs) at both ends. Its function is as follows. Catalyzes viral DNA integration into the host chromosome, by performing a series of DNA cutting and joining reactions. This enzyme activity takes place after virion entry into a cell and reverse transcription of the RNA genome in dsDNA. The first step in the integration process is 3' processing. This step requires a complex comprising the viral genome, matrix protein, Vpr and integrase. This complex is called the pre-integration complex (PIC). The integrase protein removes 2 nucleotides from each 3' end of the viral DNA, leaving recessed CA OH's at the 3' ends. In the second step, the PIC enters cell nucleus. This process is mediated through integrase and Vpr proteins, and allows the virus to infect a non dividing cell. This ability to enter the nucleus is specific of lentiviruses, other retroviruses cannot and rely on cell division to access cell chromosomes. In the third step, termed strand transfer, the integrase protein joins the previously processed 3' ends to the 5' ends of strands of target cellular DNA at the site of integration. The 5'-ends are produced by integrase-catalyzed staggered cuts, 5 bp apart. A Y-shaped, gapped, recombination intermediate results, with the 5'-ends of the viral DNA strands and the 3' ends of target DNA strands remaining unjoined, flanking a gap of 5 bp. The last step is viral DNA integration into host chromosome. This involves host DNA repair synthesis in which the 5 bp gaps between the unjoined strands are filled in and then ligated. Since this process occurs at both cuts flanking the HIV genome, a 5 bp duplication of host DNA is produced at the ends of HIV-1 integration. Alternatively, Integrase may catalyze the excision of viral DNA just after strand transfer, this is termed disintegration. This chain is Gag-Pol polyprotein (gag-pol), found in Human immunodeficiency virus type 1 group M subtype B (isolate HXB2) (HIV-1).